We begin with the raw amino-acid sequence, 420 residues long: L-rhamnose isomerase (420 aa).

Mn(2+) contacts are provided by His-264, Asp-296, and Asp-298.

It belongs to the rhamnose isomerase family. The cofactor is Mn(2+).

The protein resides in the cytoplasm. The enzyme catalyses L-rhamnopyranose = L-rhamnulose. It functions in the pathway carbohydrate degradation; L-rhamnose degradation; glycerone phosphate from L-rhamnose: step 1/3. Its function is as follows. Catalyzes the interconversion of L-rhamnose and L-rhamnulose. The chain is L-rhamnose isomerase from Listeria innocua serovar 6a (strain ATCC BAA-680 / CLIP 11262).